Here is a 1080-residue protein sequence, read N- to C-terminus: Phycobiliprotein ApcE (1080 aa).

The segment at 18–76 (QTLAVATITQAEQQDRFLGTGELNELATYFASGAKRLEIAQTLTENSEIIVSRAANRIF) is phycobilin-like 1. A phycobilin-like loop region spans residues 77 to 144 (VGGSPMSFLE…GPTPPGFRPI (68 aa)). The interval 145-237 (NVARYGPSNM…YMDVLLTEFK (93 aa)) is phycobilin-like 2. A (2R,3E)-phycocyanobilin-binding site is contributed by C195. PBS-linker domains lie at 252–432 (DQQG…FRKV), 514–693 (LGPK…QKQE), 710–888 (PDIQ…KQND), and 922–1080 (STSA…SLGN). Positions 906–930 (GTSSSGRNGFTDLGRSSTSAQGQLG) are disordered.

This sequence belongs to the phycobilisome linker protein family. Phycobilisomes of this organism are composed of a two cylinder core, from which six rods radiate. The core is mainly composed of allophycocyanin alpha and beta chains, and of three minor components: the allophycocyanin alpha-B chain, a 18.3 kDa polypeptide, and the anchor polypeptide L-CM. Contains one covalently linked bilin chromophore. This protein autochromophorylates.

It localises to the cellular thylakoid membrane. Its function is as follows. This protein is postulated to act both as terminal energy acceptor (by its phycobilin-like domains) and as a linker polypeptide (by its repeats and arms) that stabilizes the phycobilisome core architecture. In terms of biological role, has intrinsic bilin lyase activity. This Microchaete diplosiphon (Fremyella diplosiphon) protein is Phycobiliprotein ApcE (apcE).